The chain runs to 374 residues: Phosphate acyltransferase (374 aa).

Positions 323–374 are disordered; the sequence is AEMVDPREPESNPRRRTRPLQVYSGSGPEVLPLGSLERTSSRCPEPVEDAQP. Residues 326–335 are compositionally biased toward basic and acidic residues; it reads VDPREPESNP.

The protein belongs to the PlsX family. Homodimer. Probably interacts with PlsY.

It is found in the cytoplasm. The enzyme catalyses a fatty acyl-[ACP] + phosphate = an acyl phosphate + holo-[ACP]. The protein operates within lipid metabolism; phospholipid metabolism. Its function is as follows. Catalyzes the reversible formation of acyl-phosphate (acyl-PO(4)) from acyl-[acyl-carrier-protein] (acyl-ACP). This enzyme utilizes acyl-ACP as fatty acyl donor, but not acyl-CoA. The chain is Phosphate acyltransferase from Synechococcus sp. (strain JA-2-3B'a(2-13)) (Cyanobacteria bacterium Yellowstone B-Prime).